A 437-amino-acid chain; its full sequence is tRNA-2-methylthio-N(6)-dimethylallyladenosine synthase (437 aa).

The MTTase N-terminal domain maps to 1 to 115 (MKVYIETMGC…ISQVIHKEKA (115 aa)). The [4Fe-4S] cluster site is built by cysteine 10, cysteine 46, cysteine 78, cysteine 148, cysteine 152, and cysteine 155. Residues 134–367 (KKAQIRSLLN…QNRHKEILEE (234 aa)) form the Radical SAM core domain. The region spanning 370–436 (KLEVGKTHVV…KGRLMAATKG (67 aa)) is the TRAM domain.

It belongs to the methylthiotransferase family. MiaB subfamily. Monomer. It depends on [4Fe-4S] cluster as a cofactor.

The protein resides in the cytoplasm. The enzyme catalyses N(6)-dimethylallyladenosine(37) in tRNA + (sulfur carrier)-SH + AH2 + 2 S-adenosyl-L-methionine = 2-methylsulfanyl-N(6)-dimethylallyladenosine(37) in tRNA + (sulfur carrier)-H + 5'-deoxyadenosine + L-methionine + A + S-adenosyl-L-homocysteine + 2 H(+). Its function is as follows. Catalyzes the methylthiolation of N6-(dimethylallyl)adenosine (i(6)A), leading to the formation of 2-methylthio-N6-(dimethylallyl)adenosine (ms(2)i(6)A) at position 37 in tRNAs that read codons beginning with uridine. This Helicobacter pylori (strain ATCC 700392 / 26695) (Campylobacter pylori) protein is tRNA-2-methylthio-N(6)-dimethylallyladenosine synthase.